Here is a 467-residue protein sequence, read N- to C-terminus: Probable protein phosphatase 2C 6 (467 aa).

The tract at residues V61–G81 is disordered. Positions L149–L457 constitute a PPM-type phosphatase domain. 4 residues coordinate Mn(2+): D205, G206, D386, and D448.

The protein belongs to the PP2C family. As to quaternary structure, interacts with PYL9. Mg(2+) is required as a cofactor. It depends on Mn(2+) as a cofactor.

It is found in the nucleus. It localises to the cytoplasm. The protein resides in the cytosol. The enzyme catalyses O-phospho-L-seryl-[protein] + H2O = L-seryl-[protein] + phosphate. It catalyses the reaction O-phospho-L-threonyl-[protein] + H2O = L-threonyl-[protein] + phosphate. In terms of biological role, probable protein phosphatase that may function in abscisic acid (ABA) signaling. The polypeptide is Probable protein phosphatase 2C 6 (Oryza sativa subsp. japonica (Rice)).